Consider the following 74-residue polypeptide: Antimicrobial peptide AcrAP2 (74 aa).

The N-terminal stretch at 1 to 22 (MEIKYLLTVFLVLLIVSDHCQA) is a signal peptide. At lysine 40 the chain carries Lysine amide. Positions 46 to 74 (NLDGQIDRFRNFRKRDAELEELLSKLPIY) are excised as a propeptide.

It belongs to the non-disulfide-bridged peptide (NDBP) superfamily. Short antimicrobial peptide (group 4) family. In terms of tissue distribution, expressed by the venom gland.

The protein localises to the secreted. The protein resides in the target cell membrane. Functionally, has antimicrobial activity against the Gram-positive bacteria S.aureus (MIC=8 uM) and the yeast C.albicans (MIC=16 uM). Causes hemolysis on horse erythrocytes (64 uM for 100% hemolysis). Minimum bactericidal concentrations have also been tested against S.aureus and is four-fold higher (MBC=32 uM). The sequence is that of Antimicrobial peptide AcrAP2 from Androctonus crassicauda (Arabian fat-tailed scorpion).